The primary structure comprises 379 residues: GTP cyclohydrolase 1 type 2 homolog (379 aa).

Positions 64, 65, 103, 333, and 337 each coordinate a divalent metal cation.

The protein belongs to the GTP cyclohydrolase I type 2/NIF3 family. Homohexamer.

This chain is GTP cyclohydrolase 1 type 2 homolog, found in Mycobacterium bovis (strain ATCC BAA-935 / AF2122/97).